Consider the following 139-residue polypeptide: NAD(P) transhydrogenase subunit alpha part 2 (139 aa).

A run of 3 helical transmembrane segments spans residues 49-69 (FWWLMTVFVLACFIGFYVVWS), 78-98 (LMGVTNAISSVIVVGALIATG), and 107-127 (VLGFFAILLASVNIFGGFIVT).

As to quaternary structure, complex of an alpha and a beta chain; in Rhodospirillum, the alpha chain seems to be made of two subunits.

The protein localises to the cell inner membrane. It carries out the reaction NAD(+) + NADPH + H(+)(in) = NADH + NADP(+) + H(+)(out). Functionally, the transhydrogenation between NADH and NADP is coupled to respiration and ATP hydrolysis and functions as a proton pump across the membrane. The sequence is that of NAD(P) transhydrogenase subunit alpha part 2 (pntAB) from Rhodospirillum rubrum (strain ATCC 11170 / ATH 1.1.1 / DSM 467 / LMG 4362 / NCIMB 8255 / S1).